A 200-amino-acid polypeptide reads, in one-letter code: 3-isopropylmalate dehydratase small subunit (200 aa).

Belongs to the LeuD family. LeuD type 1 subfamily. In terms of assembly, heterodimer of LeuC and LeuD.

The enzyme catalyses (2R,3S)-3-isopropylmalate = (2S)-2-isopropylmalate. Its pathway is amino-acid biosynthesis; L-leucine biosynthesis; L-leucine from 3-methyl-2-oxobutanoate: step 2/4. Its function is as follows. Catalyzes the isomerization between 2-isopropylmalate and 3-isopropylmalate, via the formation of 2-isopropylmaleate. The chain is 3-isopropylmalate dehydratase small subunit from Photobacterium profundum (strain SS9).